The primary structure comprises 455 residues: L-serine dehydratase 2 (455 aa).

Belongs to the iron-sulfur dependent L-serine dehydratase family. [4Fe-4S] cluster serves as cofactor. In terms of processing, activated by post-translational modification by a system involving at least three gene products. Activation is mimicked in vitro by iron and dithiothreitol. There is considerable evidence for a free-radical activation mechanism.

It carries out the reaction L-serine = pyruvate + NH4(+). It participates in carbohydrate biosynthesis; gluconeogenesis. In terms of biological role, also deaminates threonine, particularly when it is present in high concentration. This chain is L-serine dehydratase 2 (sdaB), found in Escherichia coli (strain K12).